Here is a 240-residue protein sequence, read N- to C-terminus: Glutathione S-transferase theta-1 (240 aa).

The 81-residue stretch at 2-82 (GLELYLDLLS…YLTRKYKVPD (81 aa)) folds into the GST N-terminal domain. Residues His-40, 53-54 (KV), and 66-67 (ES) each bind glutathione. Residues 88–220 (DLQARARVDE…HEVILKAKDF (133 aa)) form the GST C-terminal domain.

This sequence belongs to the GST superfamily. Theta family. In terms of assembly, homodimer. Found in erythrocyte. Expressed at low levels in liver. In lung, expressed at low levels in club cells and ciliated cells at the alveolar/bronchiolar junction. Absent from epithelial cells of larger bronchioles.

It is found in the cytoplasm. It carries out the reaction RX + glutathione = an S-substituted glutathione + a halide anion + H(+). In terms of biological role, conjugation of reduced glutathione to a wide number of exogenous and endogenous hydrophobic electrophiles. Acts on 1,2-epoxy-3-(4-nitrophenoxy)propane, phenethylisothiocyanate 4-nitrobenzyl chloride and 4-nitrophenethyl bromide. Displays glutathione peroxidase activity with cumene hydroperoxide. The polypeptide is Glutathione S-transferase theta-1 (GSTT1) (Homo sapiens (Human)).